Here is a 527-residue protein sequence, read N- to C-terminus: ATP-dependent RNA helicase DBP3 (527 aa).

Positions Met-1–Lys-11 are enriched in basic residues. The interval Met-1–Thr-89 is disordered. Over residues His-12–Thr-24 the composition is skewed to basic and acidic residues. Residues Lys-25–Lys-44 are compositionally biased toward basic residues. Residues Glu-45–Pro-71 show a composition bias toward basic and acidic residues. The segment covering Thr-72–Thr-89 has biased composition (polar residues). Positions Leu-119 to Ala-145 match the Q motif motif. The Helicase ATP-binding domain occupies Trp-148–Val-319. Ala-161–Thr-168 serves as a coordination point for ATP. The DEAD box signature appears at Asp-266–Asp-269. A Helicase C-terminal domain is found at Lys-348–Gly-497.

The protein belongs to the DEAD box helicase family. DDX5/DBP2 subfamily.

Its subcellular location is the nucleus. The protein resides in the nucleolus. It carries out the reaction ATP + H2O = ADP + phosphate + H(+). ATP-dependent RNA helicase required for 60S ribosomal subunit synthesis. Involved in efficient pre-rRNA processing, predominantly at site A3, which is necessary for the normal formation of 25S and 5.8S rRNAs. This Debaryomyces hansenii (strain ATCC 36239 / CBS 767 / BCRC 21394 / JCM 1990 / NBRC 0083 / IGC 2968) (Yeast) protein is ATP-dependent RNA helicase DBP3 (DBP3).